We begin with the raw amino-acid sequence, 509 residues long: Activin receptor type-1 (509 aa).

Positions 1–20 (MVDGVMILPVLIMIALPSPS) are cleaved as a signal peptide. Residues 21 to 123 (MEDEKPKVNP…FPGTQNFHLE (103 aa)) lie on the Extracellular side of the membrane. Residue Asn-102 is glycosylated (N-linked (GlcNAc...) asparagine). A helical transmembrane segment spans residues 124–146 (VGLIILSVVFAVCLLACLLGVAL). Topologically, residues 147-509 (RKFKRRNQER…NSLDKLKTDC (363 aa)) are cytoplasmic. The GS domain maps to 178-207 (STLADLLDHSCTSGSGSGLPFLVQRTVARQ). Residues 208–502 (ITLLECVGKG…KTLTKIDNSL (295 aa)) enclose the Protein kinase domain. Residues 214-222 (VGKGRYGEV) and Lys-235 contribute to the ATP site. Residue Asp-336 is the Proton acceptor of the active site. Position 501 is a phosphoserine (Ser-501).

It belongs to the protein kinase superfamily. TKL Ser/Thr protein kinase family. TGFB receptor subfamily. As to quaternary structure, interacts with FKBP1A. Interacts with FCHO1. Interacts with CLU. Interacts with type II receptors AMHR2 and ACVR2A. Interacts with BMP7. Interacts with GDF2/BMP9. Interacts with BMP6 (when glycosylated); the interaction may induce HAMP expression. Interacts with TSC22D1/TSC-22. Mg(2+) is required as a cofactor. Mn(2+) serves as cofactor. In terms of tissue distribution, expressed in normal parenchymal cells, endothelial cells, fibroblasts and tumor-derived epithelial cells.

Its subcellular location is the membrane. It catalyses the reaction L-threonyl-[receptor-protein] + ATP = O-phospho-L-threonyl-[receptor-protein] + ADP + H(+). The catalysed reaction is L-seryl-[receptor-protein] + ATP = O-phospho-L-seryl-[receptor-protein] + ADP + H(+). Functionally, bone morphogenetic protein (BMP) type I receptor that is involved in a wide variety of biological processes, including bone, heart, cartilage, nervous, and reproductive system development and regulation. As a type I receptor, forms heterotetrameric receptor complexes with the type II receptors AMHR2, ACVR2A or ACVR2B. Upon binding of ligands such as BMP7 or GDF2/BMP9 to the heteromeric complexes, type II receptors transphosphorylate ACVR1 intracellular domain. In turn, ACVR1 kinase domain is activated and subsequently phosphorylates SMAD1/5/8 proteins that transduce the signal. In addition to its role in mediating BMP pathway-specific signaling, suppresses TGFbeta/activin pathway signaling by interfering with the binding of activin to its type II receptor. Besides canonical SMAD signaling, can activate non-canonical pathways such as p38 mitogen-activated protein kinases/MAPKs. May promote the expression of HAMP, potentially via its interaction with BMP6. This is Activin receptor type-1 (ACVR1) from Homo sapiens (Human).